The primary structure comprises 142 residues: uncharacterized protein (142 aa).

Positions 70 to 94 are disordered; the sequence is PKSVSNSKKKKEKAEKGLLRPTTKP. Basic and acidic residues predominate over residues 81–94; that stretch reads EKAEKGLLRPTTKP.

This is an uncharacterized protein from Bacillus subtilis (strain 168).